A 1217-amino-acid chain; its full sequence is ATP-dependent helicase/nuclease subunit A (1217 aa).

Residues 10–475 (VIWTDAQWQS…IDLSQNFRSR (466 aa)) enclose the UvrD-like helicase ATP-binding domain. Position 31-38 (31-38 (AAAGSGKT)) interacts with ATP. Positions 476–786 (KEVLSTTNYI…RMMTIHSSKG (311 aa)) constitute a UvrD-like helicase C-terminal domain.

The protein belongs to the helicase family. AddA subfamily. In terms of assembly, heterodimer of AddA and AddB/RexB. It depends on Mg(2+) as a cofactor.

The catalysed reaction is Couples ATP hydrolysis with the unwinding of duplex DNA by translocating in the 3'-5' direction.. It carries out the reaction ATP + H2O = ADP + phosphate + H(+). The heterodimer acts as both an ATP-dependent DNA helicase and an ATP-dependent, dual-direction single-stranded exonuclease. Recognizes the chi site generating a DNA molecule suitable for the initiation of homologous recombination. The AddA nuclease domain is required for chi fragment generation; this subunit has the helicase and 3' -&gt; 5' nuclease activities. The sequence is that of ATP-dependent helicase/nuclease subunit A from Staphylococcus aureus (strain MW2).